An 87-amino-acid chain; its full sequence is MNYLILISFALLVITGVESARDAYIAKPHNCVYECFDAFSSYCNGVCTKNGAKSGYCQILGTYGNGCWCIALPDNVPIRIPGKCHRR.

A signal peptide spans 1–19 (MNYLILISFALLVITGVES). Positions 21–85 (RDAYIAKPHN…VPIRIPGKCH (65 aa)) constitute an LCN-type CS-alpha/beta domain. 4 disulfides stabilise this stretch: Cys31–Cys84, Cys35–Cys57, Cys43–Cys67, and Cys47–Cys69. Residues 86 to 87 (RR) constitute a propeptide, removed by a carboxypeptidase.

This sequence belongs to the long (4 C-C) scorpion toxin superfamily. Sodium channel inhibitor family. Alpha subfamily. Expressed by the venom gland.

Its subcellular location is the secreted. Alpha toxins bind voltage-independently at site-3 of sodium channels (Nav) and inhibit the inactivation of the activated channels, thereby blocking neuronal transmission. This toxin inhibits inactivation of Nav1.6/SCN8A (EC(50)=790 nM) and drosophila DmNav1 (EC(50)=280 nM). The toxin (1 uM) does not significantly shift the midpoint of activation at the two channels, but induces a significant depolarizing shift in the V(1/2) of inactivation of the channels. Has antimicrobial activity. The chain is Sodium channel neurotoxin MeuNaTxalpha-5* from Mesobuthus eupeus (Lesser Asian scorpion).